The sequence spans 447 residues: Tubulin alpha chain (447 aa).

Positions 11, 71, 144, 145, 179, 206, and 228 each coordinate GTP. Mg(2+) is bound at residue E71. The active site involves E254.

The protein belongs to the tubulin family. In terms of assembly, dimer of alpha and beta chains. A typical microtubule is a hollow water-filled tube with an outer diameter of 25 nm and an inner diameter of 15 nM. Alpha-beta heterodimers associate head-to-tail to form protofilaments running lengthwise along the microtubule wall with the beta-tubulin subunit facing the microtubule plus end conferring a structural polarity. Microtubules usually have 13 protofilaments but different protofilament numbers can be found in some organisms and specialized cells. It depends on Mg(2+) as a cofactor.

The protein resides in the cytoplasm. It localises to the cytoskeleton. The catalysed reaction is GTP + H2O = GDP + phosphate + H(+). Its function is as follows. Tubulin is the major constituent of microtubules, a cylinder consisting of laterally associated linear protofilaments composed of alpha- and beta-tubulin heterodimers. Microtubules grow by the addition of GTP-tubulin dimers to the microtubule end, where a stabilizing cap forms. Below the cap, tubulin dimers are in GDP-bound state, owing to GTPase activity of alpha-tubulin. In Avena sativa (Oat), this protein is Tubulin alpha chain (TUBA).